A 579-amino-acid polypeptide reads, in one-letter code: Putative diflavin flavoprotein A 2 (579 aa).

Residues 50 to 243 form a zinc metallo-hydrolase region; that stretch reads QNGTTYNSYL…GKIKIIANGH (194 aa). Fe cation-binding residues include histidine 99, glutamate 101, aspartate 103, histidine 166, aspartate 185, and histidine 243. One can recognise a Flavodoxin-like domain in the interval 272–460; sequence VGLFYVADYG…MLASWVSQAS (189 aa). Residues 461–579 are flavodoxin-reductase-like; it reads LQPLGFTIAV…VRHRKVGNYY (119 aa).

This sequence in the N-terminal section; belongs to the zinc metallo-hydrolase group 3 family. It in the C-terminal section; belongs to the flavodoxin reductase family. Fe cation serves as cofactor.

In terms of biological role, mediates electron transfer from NADH to oxygen, reducing it to water. This modular protein has 3 redox cofactors, in other organisms the same activity requires 2 or 3 proteins. The sequence is that of Putative diflavin flavoprotein A 2 (dfa2) from Nostoc sp. (strain PCC 7120 / SAG 25.82 / UTEX 2576).